Reading from the N-terminus, the 332-residue chain is Ribosomal RNA small subunit methyltransferase H (332 aa).

Residues 39 to 41 (GGY), Asp56, Phe83, Asp100, and Gln107 each bind S-adenosyl-L-methionine.

Belongs to the methyltransferase superfamily. RsmH family.

It localises to the cytoplasm. It catalyses the reaction cytidine(1402) in 16S rRNA + S-adenosyl-L-methionine = N(4)-methylcytidine(1402) in 16S rRNA + S-adenosyl-L-homocysteine + H(+). In terms of biological role, specifically methylates the N4 position of cytidine in position 1402 (C1402) of 16S rRNA. The polypeptide is Ribosomal RNA small subunit methyltransferase H (Bartonella tribocorum (strain CIP 105476 / IBS 506)).